Here is a 2230-residue protein sequence, read N- to C-terminus: Genome polyprotein (2230 aa).

A disordered region spans residues 59 to 80 (TAEVGAHQTEPLKTSVDKPGSK). 2 short sequence motifs ((L)YPX(n)L motif) span residues 171-175 (YPHGL) and 204-209 (YPVWEL). The involved in P1-2A pentamerization stretch occupies residues 770–840 (MLDRIASGDL…PRKVKGLFSQ (71 aa)). The helical transmembrane segment at 1015–1035 (TVEIINTVLCFVKSGILLYVI) threads the bilayer. Residues 1047–1074 (IGLLQVMNYADIGCSVISCGKIFSKMLE) form a membrane-penetrating ability region. The stretch at 1131–1156 (KKKDVLNVLKENQHRIEKAIEEADQF) forms a coiled coil. The SF3 helicase domain occupies 1208-1370 (HQKLKNLGSI…SFYKNAHNDM (163 aa)). Position 1234–1241 (1234–1241 (GKRGGGKS)) interacts with ATP. Residues 1466–1486 (WVAIGAAVGVLGVLVGGWFVY) form a helical membrane-spanning segment. Tyrosine 1501 carries the O-(5'-phospho-RNA)-tyrosine modification. In terms of domain architecture, Peptidase C3 spans 1516–1730 (DPVDSQSTLE…VAKLVTQEMF (215 aa)). Catalysis depends on for protease 3C activity residues histidine 1565, aspartate 1605, and cysteine 1693. The region spanning 1979-2100 (DVGLDLDFSS…VFSRNVQIDN (122 aa)) is the RdRp catalytic domain.

The protein belongs to the picornaviridae polyprotein family. As to quaternary structure, homodimer. Homomultimer; probably interacts with membranes in a multimeric form. Seems to assemble into amyloid-like fibers. Homodimer. Monomer. Interacts with protein 3CD. In terms of assembly, interacts with host ACBD3. As to quaternary structure, interacts with protein 3AB. Interacts with human MAVS. In terms of assembly, homodimer; disulfide-linked. As to quaternary structure, homopentamer. Homooligomer. Interacts with capsid protein VP2. Interacts with capsid protein VP3. In terms of assembly, interacts with capsid protein VP1. Interacts with capsid protein VP3. As to quaternary structure, interacts with capsid protein VP1. Interacts with capsid protein VP2. Post-translationally, specific enzymatic cleavages by viral protease in vivo yield a variety of precursors and mature proteins. Polyprotein processing intermediates are produced, such as P1-2A which is a functional precursor of the structural proteins, VP0 which is a VP4-VP2 precursor, VP1-2A precursor, 3ABC precursor which is a stable and catalytically active precursor of 3A, 3B and 3C proteins, 3AB and 3CD precursors. The assembly signal 2A is removed from VP1-2A by a host protease, possibly host Cathepsin L. This cleavage occurs over a region of 3 amino-acids probably generating VP1 proteins with heterogeneous C-termini. During virion maturation, immature virions are rendered infectious following cleavage of VP0 into VP4 and VP2. This maturation seems to be an autocatalytic event triggered by the presence of RNA in the capsid and is followed by a conformational change of the particle. In terms of processing, the assembly signal 2A is removed from VP1-2A by a host protease, possibly host Cathepsin L in naked virions. This cleavage does not occur in enveloped virions. This cleavage occurs over a region of 3 amino-acids probably generating VP1 proteins with heterogeneous C-termini. Post-translationally, VPg is uridylylated prior to priming replication into VPg-pUpU. Unlike other picornaviruses, does not seem to be myristoylated.

Its subcellular location is the virion. It localises to the host endosome. The protein resides in the host multivesicular body. It is found in the host membrane. The protein localises to the host mitochondrion outer membrane. Its subcellular location is the host cytoplasm. It localises to the host cytoplasmic vesicle membrane. It carries out the reaction RNA(n) + a ribonucleoside 5'-triphosphate = RNA(n+1) + diphosphate. The catalysed reaction is a ribonucleoside 5'-triphosphate + H2O = a ribonucleoside 5'-diphosphate + phosphate + H(+). The enzyme catalyses Selective cleavage of Gln-|-Gly bond in the poliovirus polyprotein. In other picornavirus reactions Glu may be substituted for Gln, and Ser or Thr for Gly.. In terms of biological role, capsid proteins VP1, VP2, and VP3 form a closed capsid enclosing the viral positive strand RNA genome. All these proteins contain a beta-sheet structure called beta-barrel jelly roll. Together they form an icosahedral capsid (T=3) composed of 60 copies of each VP1, VP2, and VP3, with a diameter of approximately 300 Angstroms. VP1 is situated at the 12 fivefold axes, whereas VP2 and VP3 are located at the quasi-sixfold axes. The naked capsid interacts with the host receptor HAVCR1 to provide virion attachment to and probably entry into the target cell. Its function is as follows. VP0 precursor is a component of the immature procapsids. Plays a role in the assembly of the 12 pentamers into an icosahedral structure. Has not been detected in mature virions, supposedly owing to its small size. Functionally, precursor component of immature procapsids that corresponds to an extended form of the structural protein VP1. After maturation, possibly by the host Cathepsin L, the assembly signal 2A is cleaved to give rise to the mature VP1 protein. In terms of biological role, functions as a viroporin. Affects membrane integrity and causes an increase in membrane permeability. Involved in host intracellular membrane rearrangements probably to give rise to the viral factories. Does not disrupt calcium homeostasis or glycoprotein trafficking. Antagonizes the innate immune response of the host by suppressing IFN-beta synthesis, which it achieves by interfering with the RIG-I/IFIH1 pathway. Its function is as follows. Affects membrane integrity and causes an increase in membrane permeability. Associates with and induces structural rearrangements of intracellular membranes. Displays RNA-binding activity. Functionally, the precursor 3ABC is targeted to the mitochondrial membrane where protease 3C activity cleaves and inhibits the host antiviral protein MAVS, thereby disrupting activation of IRF3 through the IFIH1/MDA5 pathway. In vivo, the protease activity of 3ABC precursor is more efficient in cleaving the 2BC precursor than that of protein 3C. The 3ABC precursor may therefore play a role in the proteolytic processing of the polyprotein. Possible viroporin. In terms of biological role, interacts with the 3CD precursor and with RNA structures found at both the 5'- and 3'-termini of the viral genome. Since the 3AB precursor contains the hydrophobic domain 3A, it probably anchors the whole viral replicase complex to intracellular membranes on which viral RNA synthesis occurs. Its function is as follows. May serve as membrane anchor to the 3AB and 3ABC precursors via its hydrophobic domain. May interact with RNA. Acts as a primer for viral RNA replication and remains covalently bound to viral genomic RNA. VPg is uridylylated prior to priming replication into VPg-pUpU. The VPg-pUpU is then used as primer on the genomic RNA poly(A) by the RNA-dependent RNA polymerase to replicate the viral genome. Functionally, cysteine protease that generates mature viral proteins from the precursor polyprotein. In addition to its proteolytic activity, it binds to viral RNA, and thus influences viral genome replication. RNA and substrate bind cooperatively to the protease. Cleaves IKBKG/NEMO to impair innate immune signaling. Cleaves host PABPC1 which may participate in the switch of viral translation to RNA synthesis. In terms of biological role, interacts with the 3AB precursor and with RNA structures found at both the 5'- and 3'-termini of the viral genome. Disrupts TLR3 signaling by degrading the host adapter protein TICAM1/TRIF. Its function is as follows. RNA-directed RNA polymerase 3D-POL replicates genomic and antigenomic RNA by recognizing replications specific signals. The sequence is that of Genome polyprotein from Callithrix (Owl-faced monkey).